A 367-amino-acid chain; its full sequence is Histidinol-phosphate aminotransferase 1 (367 aa).

An N6-(pyridoxal phosphate)lysine modification is found at Lys-226.

Belongs to the class-II pyridoxal-phosphate-dependent aminotransferase family. Histidinol-phosphate aminotransferase subfamily. As to quaternary structure, homodimer. The cofactor is pyridoxal 5'-phosphate.

It catalyses the reaction L-histidinol phosphate + 2-oxoglutarate = 3-(imidazol-4-yl)-2-oxopropyl phosphate + L-glutamate. The protein operates within amino-acid biosynthesis; L-histidine biosynthesis; L-histidine from 5-phospho-alpha-D-ribose 1-diphosphate: step 7/9. In Haemophilus influenzae (strain ATCC 51907 / DSM 11121 / KW20 / Rd), this protein is Histidinol-phosphate aminotransferase 1 (hisC1).